The primary structure comprises 358 residues: DNA ligase C (358 aa).

Lysine 29 functions as the N6-AMP-lysine intermediate in the catalytic mechanism.

The protein belongs to the ATP-dependent DNA ligase family. A divalent metal cation is required as a cofactor.

The catalysed reaction is ATP + (deoxyribonucleotide)n-3'-hydroxyl + 5'-phospho-(deoxyribonucleotide)m = (deoxyribonucleotide)n+m + AMP + diphosphate.. DNA ligase that seals nicks in double-stranded DNA during DNA replication, DNA recombination and DNA repair. The polypeptide is DNA ligase C (ligC) (Mycobacterium tuberculosis (strain ATCC 25618 / H37Rv)).